The following is a 398-amino-acid chain: 4-hydroxy-3-methylbut-2-enyl diphosphate reductase (398 aa).

[4Fe-4S] cluster is bound at residue Cys66. His96 provides a ligand contact to (2E)-4-hydroxy-3-methylbut-2-enyl diphosphate. His96 is a binding site for dimethylallyl diphosphate. His96 contacts isopentenyl diphosphate. [4Fe-4S] cluster is bound at residue Cys157. His185 provides a ligand contact to (2E)-4-hydroxy-3-methylbut-2-enyl diphosphate. His185 is a binding site for dimethylallyl diphosphate. Isopentenyl diphosphate is bound at residue His185. Residue Glu187 is the Proton donor of the active site. Thr250 is a binding site for (2E)-4-hydroxy-3-methylbut-2-enyl diphosphate. Cys288 is a binding site for [4Fe-4S] cluster. 4 residues coordinate (2E)-4-hydroxy-3-methylbut-2-enyl diphosphate: Ser317, Ser318, Asn319, and Ser379. Dimethylallyl diphosphate-binding residues include Ser317, Ser318, Asn319, and Ser379. Isopentenyl diphosphate contacts are provided by Ser317, Ser318, Asn319, and Ser379.

The protein belongs to the IspH family. The cofactor is [4Fe-4S] cluster.

The enzyme catalyses isopentenyl diphosphate + 2 oxidized [2Fe-2S]-[ferredoxin] + H2O = (2E)-4-hydroxy-3-methylbut-2-enyl diphosphate + 2 reduced [2Fe-2S]-[ferredoxin] + 2 H(+). It carries out the reaction dimethylallyl diphosphate + 2 oxidized [2Fe-2S]-[ferredoxin] + H2O = (2E)-4-hydroxy-3-methylbut-2-enyl diphosphate + 2 reduced [2Fe-2S]-[ferredoxin] + 2 H(+). It participates in isoprenoid biosynthesis; dimethylallyl diphosphate biosynthesis; dimethylallyl diphosphate from (2E)-4-hydroxy-3-methylbutenyl diphosphate: step 1/1. It functions in the pathway isoprenoid biosynthesis; isopentenyl diphosphate biosynthesis via DXP pathway; isopentenyl diphosphate from 1-deoxy-D-xylulose 5-phosphate: step 6/6. Functionally, catalyzes the conversion of 1-hydroxy-2-methyl-2-(E)-butenyl 4-diphosphate (HMBPP) into a mixture of isopentenyl diphosphate (IPP) and dimethylallyl diphosphate (DMAPP). Acts in the terminal step of the DOXP/MEP pathway for isoprenoid precursor biosynthesis. In Synechococcus sp. (strain ATCC 27144 / PCC 6301 / SAUG 1402/1) (Anacystis nidulans), this protein is 4-hydroxy-3-methylbut-2-enyl diphosphate reductase.